Reading from the N-terminus, the 350-residue chain is Phenylalanine--tRNA ligase alpha subunit (350 aa).

Position 257 (glutamate 257) interacts with Mg(2+).

Belongs to the class-II aminoacyl-tRNA synthetase family. Phe-tRNA synthetase alpha subunit type 1 subfamily. As to quaternary structure, tetramer of two alpha and two beta subunits. The cofactor is Mg(2+).

It is found in the cytoplasm. The enzyme catalyses tRNA(Phe) + L-phenylalanine + ATP = L-phenylalanyl-tRNA(Phe) + AMP + diphosphate + H(+). This Listeria welshimeri serovar 6b (strain ATCC 35897 / DSM 20650 / CCUG 15529 / CIP 8149 / NCTC 11857 / SLCC 5334 / V8) protein is Phenylalanine--tRNA ligase alpha subunit.